The primary structure comprises 622 residues: Pyranose 2-oxidase (622 aa).

The signal sequence occupies residues 1 to 28; that stretch reads MSTSSSDPFYNFAKTSFKSAAAQKASAT. Positions 29-38 are excised as a propeptide; that stretch reads SLPPLPGPDQ. Histidine 167 carries the post-translational modification Tele-8alpha-FAD histidine. Glutamine 448 and histidine 450 together coordinate substrate. The active-site Proton acceptor is the histidine 548. Asparagine 593 is a catalytic residue.

Belongs to the GMC oxidoreductase family. Homotetramer. FAD serves as cofactor.

The protein localises to the periplasm. It catalyses the reaction D-glucose + O2 = 2-dehydro-D-glucose + H2O2. Functionally, catalyzes the oxidation of various aldopyranoses and disaccharides on carbon-2 to the corresponding 2-keto sugars concomitant with the reduction of O(2) to H(2)O(2). Plays an important role in lignin degradation of wood rot fungi by supplying the essential cosubstrate H(2)O(2) for the ligninolytic peroxidases, lignin peroxidase and manganese-dependent peroxidase. The sequence is that of Pyranose 2-oxidase (p2ox) from Trametes pubescens (White-rot fungus).